The chain runs to 390 residues: Chorismate synthase 2 (390 aa).

Arg-39 and Arg-45 together coordinate NADP(+). Residues 132–134 (RSS), 253–254 (NA), Gly-298, 313–317 (KPIPT), and Arg-339 each bind FMN.

The protein belongs to the chorismate synthase family. As to quaternary structure, homotetramer. The cofactor is FMNH2.

It catalyses the reaction 5-O-(1-carboxyvinyl)-3-phosphoshikimate = chorismate + phosphate. It participates in metabolic intermediate biosynthesis; chorismate biosynthesis; chorismate from D-erythrose 4-phosphate and phosphoenolpyruvate: step 7/7. Its function is as follows. Catalyzes the anti-1,4-elimination of the C-3 phosphate and the C-6 proR hydrogen from 5-enolpyruvylshikimate-3-phosphate (EPSP) to yield chorismate, which is the branch point compound that serves as the starting substrate for the three terminal pathways of aromatic amino acid biosynthesis. This reaction introduces a second double bond into the aromatic ring system. The protein is Chorismate synthase 2 of Bacillus cereus (strain ZK / E33L).